Consider the following 289-residue polypeptide: 4-hydroxy-tetrahydrodipicolinate synthase (289 aa).

Thr-44 contributes to the pyruvate binding site. The Proton donor/acceptor role is filled by Tyr-132. The active-site Schiff-base intermediate with substrate is the Lys-161. A pyruvate-binding site is contributed by Ile-201.

This sequence belongs to the DapA family. In terms of assembly, homotetramer; dimer of dimers.

The protein localises to the cytoplasm. It catalyses the reaction L-aspartate 4-semialdehyde + pyruvate = (2S,4S)-4-hydroxy-2,3,4,5-tetrahydrodipicolinate + H2O + H(+). It participates in amino-acid biosynthesis; L-lysine biosynthesis via DAP pathway; (S)-tetrahydrodipicolinate from L-aspartate: step 3/4. In terms of biological role, catalyzes the condensation of (S)-aspartate-beta-semialdehyde [(S)-ASA] and pyruvate to 4-hydroxy-tetrahydrodipicolinate (HTPA). The chain is 4-hydroxy-tetrahydrodipicolinate synthase from Methanocaldococcus jannaschii (strain ATCC 43067 / DSM 2661 / JAL-1 / JCM 10045 / NBRC 100440) (Methanococcus jannaschii).